Here is a 374-residue protein sequence, read N- to C-terminus: Methylthioribose-1-phosphate isomerase (374 aa).

Aspartate 251 serves as the catalytic Proton donor.

It belongs to the eIF-2B alpha/beta/delta subunits family. MtnA subfamily.

Its subcellular location is the cytoplasm. The protein localises to the nucleus. It catalyses the reaction 5-(methylsulfanyl)-alpha-D-ribose 1-phosphate = 5-(methylsulfanyl)-D-ribulose 1-phosphate. It participates in amino-acid biosynthesis; L-methionine biosynthesis via salvage pathway; L-methionine from S-methyl-5-thio-alpha-D-ribose 1-phosphate: step 1/6. Its function is as follows. Catalyzes the interconversion of methylthioribose-1-phosphate (MTR-1-P) into methylthioribulose-1-phosphate (MTRu-1-P). The chain is Methylthioribose-1-phosphate isomerase from Oryza sativa subsp. indica (Rice).